A 135-amino-acid polypeptide reads, in one-letter code: ATP synthase epsilon chain (135 aa).

It belongs to the ATPase epsilon chain family. As to quaternary structure, F-type ATPases have 2 components, CF(1) - the catalytic core - and CF(0) - the membrane proton channel. CF(1) has five subunits: alpha(3), beta(3), gamma(1), delta(1), epsilon(1). CF(0) has three main subunits: a, b and c.

It localises to the cell inner membrane. In terms of biological role, produces ATP from ADP in the presence of a proton gradient across the membrane. The protein is ATP synthase epsilon chain of Rhodopseudomonas palustris (strain BisB5).